Here is a 524-residue protein sequence, read N- to C-terminus: Alkaline phosphatase, tissue-nonspecific isozyme (524 aa).

An N-terminal signal peptide occupies residues 1-17; it reads MISPFLVLAIGTCLTNS. Asp60 is a binding site for Mg(2+). Zn(2+) contacts are provided by Asp60 and Ser110. Residue Ser110 is the Phosphoserine intermediate of the active site. Phosphoserine is present on Ser110. A disulfide bridge links Cys139 with Cys201. N-linked (GlcNAc...) asparagine glycosylation occurs at Asn140. Residue Thr173 participates in Mg(2+) binding. The N-linked (GlcNAc...) asparagine glycan is linked to Asn230. Glu235 serves as a coordination point for Ca(2+). N-linked (GlcNAc...) asparagine glycosylation is present at Asn271. 2 residues coordinate Ca(2+): Phe290 and Glu291. N-linked (GlcNAc...) asparagine glycosylation occurs at Asn303. Asp306 provides a ligand contact to Ca(2+). A Mg(2+)-binding site is contributed by Glu332. Positions 337, 341, 378, and 379 each coordinate Zn(2+). An N-linked (GlcNAc...) asparagine glycan is attached at Asn430. His454 lines the Zn(2+) pocket. The cysteines at positions 489 and 497 are disulfide-linked. Gly501 is lipidated: GPI-anchor amidated glycine. Positions 502 to 524 are cleaved as a propeptide — removed in mature form; sequence SGSAPSPGALLLPLAVLSLRTLF.

The protein belongs to the alkaline phosphatase family. In terms of assembly, homodimer. Requires Mg(2+) as cofactor. Zn(2+) serves as cofactor. The cofactor is Ca(2+). Post-translationally, N-glycosylated. Widely expressed. Expressed in DRG neurons and spinal cord neurons.

It is found in the cell membrane. The protein localises to the extracellular vesicle membrane. Its subcellular location is the mitochondrion membrane. The protein resides in the mitochondrion intermembrane space. The enzyme catalyses a phosphate monoester + H2O = an alcohol + phosphate. It catalyses the reaction diphosphate + H2O = 2 phosphate + H(+). The catalysed reaction is pyridoxal 5'-phosphate + H2O = pyridoxal + phosphate. It carries out the reaction phosphoethanolamine + H2O = ethanolamine + phosphate. The enzyme catalyses N-phosphocreatine + H2O = creatine + phosphate. It catalyses the reaction ATP + H2O = ADP + phosphate + H(+). The catalysed reaction is ADP + H2O = AMP + phosphate + H(+). It carries out the reaction AMP + H2O = adenosine + phosphate. Its activity is regulated as follows. Phosphatase activity is specifically inhibited by 5-((5-chloro-2-methoxyphenyl)sulfonamido)nicotinamide (SBI-425). In terms of biological role, alkaline phosphatase that metabolizes various phosphate compounds and plays a key role in skeletal mineralization and adaptive thermogenesis. Has broad substrate specificity and can hydrolyze a considerable variety of compounds: however, only a few substrates, such as diphosphate (inorganic pyrophosphate; PPi), pyridoxal 5'-phosphate (PLP) and N-phosphocreatine are natural substrates. Plays an essential role in skeletal and dental mineralization via its ability to hydrolyze extracellular diphosphate, a potent mineralization inhibitor, to phosphate: it thereby promotes hydroxyapatite crystal formation and increases inorganic phosphate concentration. Acts in a non-redundant manner with PHOSPHO1 in skeletal mineralization: while PHOSPHO1 mediates the initiation of hydroxyapatite crystallization in the matrix vesicles (MVs), ALPL/TNAP catalyzes the spread of hydroxyapatite crystallization in the extracellular matrix. Also promotes dephosphorylation of osteopontin (SSP1), an inhibitor of hydroxyapatite crystallization in its phosphorylated state; it is however unclear whether ALPL/TNAP mediates SSP1 dephosphorylation via a direct or indirect manner. Catalyzes dephosphorylation of PLP to pyridoxal (PL), the transportable form of vitamin B6, in order to provide a sufficient amount of PLP in the brain, an essential cofactor for enzymes catalyzing the synthesis of diverse neurotransmitters. Additionally, also able to mediate ATP degradation in a stepwise manner to adenosine, thereby regulating the availability of ligands for purinergic receptors. Also capable of dephosphorylating microbial products, such as lipopolysaccharides (LPS) as well as other phosphorylated small-molecules, such as poly-inosine:cytosine (poly I:C). Acts as a key regulator of adaptive thermogenesis as part of the futile creatine cycle: localizes to the mitochondria of thermogenic fat cells and acts by mediating hydrolysis of N-phosphocreatine to initiate a futile cycle of creatine dephosphorylation and phosphorylation. During the futile creatine cycle, creatine and N-phosphocreatine are in a futile cycle, which dissipates the high energy charge of N-phosphocreatine as heat without performing any mechanical or chemical work. The protein is Alkaline phosphatase, tissue-nonspecific isozyme of Mus musculus (Mouse).